The following is a 229-amino-acid chain: 1-Cys peroxiredoxin PER1 (229 aa).

The 170-residue stretch at 4–173 (LTIGDTVPNL…VLRAVDSLLT (170 aa)) folds into the Thioredoxin domain. The active-site Cysteine sulfenic acid (-SOH) intermediate is Cys-46. Residues 205–228 (RKMFPQGFETADLPSKKGYLRFTK) carry the Bipartite nuclear localization signal motif.

The protein belongs to the peroxiredoxin family. Prx6 subfamily.

The protein localises to the nucleus. Its subcellular location is the cytoplasm. It carries out the reaction a hydroperoxide + [thioredoxin]-dithiol = an alcohol + [thioredoxin]-disulfide + H2O. Thiol-specific peroxidase that catalyzes the reduction of hydrogen peroxide and organic hydroperoxides to water and alcohols, respectively. Seems to contribute to the inhibition of germination during stress. The protein is 1-Cys peroxiredoxin PER1 (PER1) of Zea mays (Maize).